Reading from the N-terminus, the 420-residue chain is UDP-N-acetylmuramoylalanine--D-glutamate ligase (420 aa).

Gly109–Thr115 is an ATP binding site.

The protein belongs to the MurCDEF family.

The protein resides in the cytoplasm. It carries out the reaction UDP-N-acetyl-alpha-D-muramoyl-L-alanine + D-glutamate + ATP = UDP-N-acetyl-alpha-D-muramoyl-L-alanyl-D-glutamate + ADP + phosphate + H(+). It functions in the pathway cell wall biogenesis; peptidoglycan biosynthesis. In terms of biological role, cell wall formation. Catalyzes the addition of glutamate to the nucleotide precursor UDP-N-acetylmuramoyl-L-alanine (UMA). The polypeptide is UDP-N-acetylmuramoylalanine--D-glutamate ligase (Chlamydia abortus (strain DSM 27085 / S26/3) (Chlamydophila abortus)).